A 26-amino-acid polypeptide reads, in one-letter code: uncharacterized protein (26 aa).

Residues 3–23 (IIYLILFLIVIYLLYRILDVL) form a helical membrane-spanning segment.

It localises to the membrane. This is an uncharacterized protein from Helicobacter pylori (strain J99 / ATCC 700824) (Campylobacter pylori J99).